We begin with the raw amino-acid sequence, 178 residues long: ATP synthase subunit b, chloroplastic (178 aa).

Residues 34-50 (LAILTGGIFYLGSNALS) form a helical membrane-spanning segment.

The protein belongs to the ATPase B chain family. In terms of assembly, F-type ATPases have 2 components, F(1) - the catalytic core - and F(0) - the membrane proton channel. F(1) has five subunits: alpha(3), beta(3), gamma(1), delta(1), epsilon(1). F(0) has four main subunits: a(1), b(1), b'(1) and c(10-14). The alpha and beta chains form an alternating ring which encloses part of the gamma chain. F(1) is attached to F(0) by a central stalk formed by the gamma and epsilon chains, while a peripheral stalk is formed by the delta, b and b' chains.

The protein localises to the plastid. The protein resides in the chloroplast thylakoid membrane. Functionally, f(1)F(0) ATP synthase produces ATP from ADP in the presence of a proton or sodium gradient. F-type ATPases consist of two structural domains, F(1) containing the extramembraneous catalytic core and F(0) containing the membrane proton channel, linked together by a central stalk and a peripheral stalk. During catalysis, ATP synthesis in the catalytic domain of F(1) is coupled via a rotary mechanism of the central stalk subunits to proton translocation. Its function is as follows. Component of the F(0) channel, it forms part of the peripheral stalk, linking F(1) to F(0). This Ochrosphaera neapolitana protein is ATP synthase subunit b, chloroplastic.